Consider the following 104-residue polypeptide: Integration host factor subunit alpha (104 aa).

This sequence belongs to the bacterial histone-like protein family. In terms of assembly, heterodimer of an alpha and a beta chain.

Functionally, this protein is one of the two subunits of integration host factor, a specific DNA-binding protein that functions in genetic recombination as well as in transcriptional and translational control. This Bartonella quintana (strain Toulouse) (Rochalimaea quintana) protein is Integration host factor subunit alpha.